A 301-amino-acid chain; its full sequence is UDP-3-O-acyl-N-acetylglucosamine deacetylase (301 aa).

Residues His-75, His-233, and Asp-237 each coordinate Zn(2+). The active-site Proton donor is His-260.

This sequence belongs to the LpxC family. The cofactor is Zn(2+).

It carries out the reaction a UDP-3-O-[(3R)-3-hydroxyacyl]-N-acetyl-alpha-D-glucosamine + H2O = a UDP-3-O-[(3R)-3-hydroxyacyl]-alpha-D-glucosamine + acetate. The protein operates within glycolipid biosynthesis; lipid IV(A) biosynthesis; lipid IV(A) from (3R)-3-hydroxytetradecanoyl-[acyl-carrier-protein] and UDP-N-acetyl-alpha-D-glucosamine: step 2/6. Its function is as follows. Catalyzes the hydrolysis of UDP-3-O-myristoyl-N-acetylglucosamine to form UDP-3-O-myristoylglucosamine and acetate, the committed step in lipid A biosynthesis. This Aliarcobacter butzleri (strain RM4018) (Arcobacter butzleri) protein is UDP-3-O-acyl-N-acetylglucosamine deacetylase.